A 792-amino-acid polypeptide reads, in one-letter code: MTTQESIKPLVDRILSNPLQFNAAMISNKSNNNDTSAAPENSSYIVIGKQHNNNSNSTAIAATAESKQIKENNLIDRPNGKKTNTVPKSMAEALLLYTSKNDKDAADATGAKKSAELSTELSTEPPSSSSEDDKVGKEEEEEGEIFHEARDYVEPRKASLKERDNADKGDGEDIGEDIGEDIGEDIGEDIGEDIGENLGSPLATIDDSSNENEKEKRKELSTSISSDDEIEDDEDEDDMDYDSSAMEKELPEEEENDSSSKISEGEKKSLYQDLMENSTVEVNRYEPVNNTKENGNRNPKGEEEEEEEEELKHKSRSITPPVTISNLSNFYQFNENINDRGSLNSTRIVKNWGDKFTNLKPRGLLNHGVTCYTNAAVQAMLHIPSIQHYLFDILMGKYDSTISKNSVSYTLAETSKKMWLPVSKNPRKNVSASYINPKHLISRLDDINCMMSEWQQEDSHEYFMSLMSRLQEDSVPKGHKLIESIIYDIFGGLLKQIVTCKSCGSISKTEQPFYDLSLHLKGKKKLDPNSDLSSDSINGTSATTSTTTSNAATKPSLSSSSSVNLNNGSPFAAASDLSSANRRFSIEKSIKDFFNPELIKVDKEQKGYVCEKCHKTTNAVKHSSILRAPETLLVHLKKFRFNGTSSSKMKQAVSYPMFLDLTEYCESKELPVKYQLLSVVVHEGRSLSSGHYIAHCKQPDGSWATYDDEYINIISERDVLKEPNAYYLLYTRLTPKSVPLPLAKSAMATGNVTSKSKQEQAVNEPNNRPLKINSKKNNRKKWKKNKKRKFTK.

Positions threonine 2 to serine 27 are DHR2-binding module. 2 disordered regions span residues alanine 64–proline 87 and lysine 103–proline 320. Residues aspartate 107–serine 129 show a composition bias toward low complexity. The SIR4-binding module stretch occupies residues threonine 109–isoleucine 145. Residues glutamate 144–glycine 171 are compositionally biased toward basic and acidic residues. The UTP22-binding module stretch occupies residues aspartate 167 to serine 208. The span at glutamate 172–glycine 195 shows a compositional bias: acidic residues. Positions glutamate 211–leucine 220 are enriched in basic and acidic residues. Residues serine 226–tyrosine 241 are compositionally biased toward acidic residues. Residues valine 288 to arginine 297 show a composition bias toward polar residues. The USP domain occupies arginine 362–leucine 733. The Nucleophile role is filled by cysteine 371. The tract at residues leucine 526 to valine 563 is disordered. Residues serine 530 to glycine 539 are compositionally biased toward polar residues. Low complexity predominate over residues threonine 540–valine 563. Catalysis depends on histidine 691, which acts as the Proton acceptor. Over residues threonine 749–asparagine 766 the composition is skewed to polar residues. The tract at residues threonine 749–lysine 792 is disordered. Positions asparagine 773 to lysine 792 are enriched in basic residues.

The protein belongs to the peptidase C19 family. In terms of assembly, interacts with SIR4. Interacts with the proliferating-cell nuclear antigen PCNA/POL30. Interacts with DHR2 and UTP22.

The protein resides in the nucleus. Its subcellular location is the chromosome. It is found in the telomere. It localises to the nucleolus. The catalysed reaction is Thiol-dependent hydrolysis of ester, thioester, amide, peptide and isopeptide bonds formed by the C-terminal Gly of ubiquitin (a 76-residue protein attached to proteins as an intracellular targeting signal).. Functionally, deubiquitinating enzyme involved in telomere and HM loci silencing, which is the repression of chromatin structure which leads to a stop in the transcription of nearby genes. Targets histone H2B for deubiquitination, thus helping to localize SIR2 to the telomere. At silent chromatin, including telomeres and the rDNA locus, not only maintains low H2B 'Lys-123' ubiquitination (H2BK123Ub), but also low H3 'Lys-4' and 'Lys-79' methylation (H3K4me and H3K79me, respectively). Controls the proliferating-cell nuclear antigen PCNA/POL30 deubiquitination which is crucial for keeping TLS polymerases in check as well as for down-regulating the error-free bypass. Deubiquitinates and stabilizes RPA190, the largest subunit of RNA polymerase I, to achieve optimal levels of ribosomes and cell growth. Also protects nutrient transporters such as GAP1 from ubiquitin-dependent endocytosis. This chain is Ubiquitin carboxyl-terminal hydrolase 10 (UBP10), found in Saccharomyces cerevisiae (strain ATCC 204508 / S288c) (Baker's yeast).